The sequence spans 60 residues: Potassium channel toxin alpha-KTx 12.5 (60 aa).

The signal sequence occupies residues 1 to 22 (MNKLPILIFMLLVCSMFISSDC). Intrachain disulfides connect C30-C51, C36-C56, and C40-C58.

The protein belongs to the short scorpion toxin superfamily. Potassium channel inhibitor family. Alpha-KTx 12 subfamily. As to expression, expressed by the venom gland.

The protein localises to the secreted. This recombinant toxin inhibits the mammalian voltage-gated potassium channels Kv1.3/KCNA3 (IC(50)=28 nM). Kv1.1/KCNA1 and Kv1.2/KCNA2 potassium channels are also weakly inhibited (IC(50)=1.73 uM and IC(50)=12.63 uM, respectively). This is Potassium channel toxin alpha-KTx 12.5 from Lychas mucronatus (Chinese swimming scorpion).